Reading from the N-terminus, the 994-residue chain is Transposase for transposon Tn2501 (994 aa).

This sequence belongs to the transposase 7 family.

Its function is as follows. Required for transposition of transposon Tn2501. This Escherichia coli protein is Transposase for transposon Tn2501 (tnpA).